The sequence spans 365 residues: Delta(7)-sterol 5(6)-desaturase ERG3 (365 aa).

Over 1-92 the chain is Cytoplasmic; it reads MDLVLEVADH…LLPRSSILRE (92 aa). The helical transmembrane segment at 93–113 threads the bilayer; that stretch reads FLSLWVIVTIFGLLLYLFTAS. Over 114 to 140 the chain is Lumenal; it reads LSYVFVFDKSIFNHPRYLKNQMAMEIK. The chain crosses the membrane as a helical span at residues 141–161; it reads LAVSAIPWMSMLTVPWFVMEL. Residues 162 to 242 are Cytoplasmic-facing; the sequence is NGHSKLYMKI…VDGFLQSISY (81 aa). One can recognise a Fatty acid hydroxylase domain in the interval 187–311; the sequence is TFIFFTDCGV…FTTLWDRLGG (125 aa). Residues 200 to 204 carry the Histidine box-1 motif; it reads HRWLH. The short motif at 213-217 is the Histidine box-2 element; that stretch reads HKPHH. The helical transmembrane segment at 243–263 threads the bilayer; the sequence is HIYPLILPLHKVSYLILFTFV. Residues 264 to 365 lie on the Lumenal side of the membrane; the sequence is NFWTVMIHDG…ENDPNTKKNN (102 aa). Positions 288 to 292 match the Histidine box-3 motif; sequence HTVHH. Residues K324 and K344 each participate in a glycyl lysine isopeptide (Lys-Gly) (interchain with G-Cter in ubiquitin) cross-link.

Belongs to the sterol desaturase family. Interacts with ERG28. Fe cation is required as a cofactor.

The protein localises to the endoplasmic reticulum membrane. The catalysed reaction is episterol + 2 Fe(II)-[cytochrome b5] + O2 + 2 H(+) = 5-dehydroepisterol + 2 Fe(III)-[cytochrome b5] + 2 H2O. It functions in the pathway steroid metabolism; ergosterol biosynthesis; ergosterol from zymosterol: step 3/5. In terms of biological role, C-5 sterol desaturase; part of the third module of ergosterol biosynthesis pathway that includes the late steps of the pathway. ERG3 catalyzes the introduction of a C-5 double bond in the B ring to produce 5-dehydroepisterol. The third module or late pathway involves the ergosterol synthesis itself through consecutive reactions that mainly occur in the endoplasmic reticulum (ER) membrane. Firstly, the squalene synthase ERG9 catalyzes the condensation of 2 farnesyl pyrophosphate moieties to form squalene, which is the precursor of all steroids. Squalene synthase is crucial for balancing the incorporation of farnesyl diphosphate (FPP) into sterol and nonsterol isoprene synthesis. Secondly, the squalene epoxidase ERG1 catalyzes the stereospecific oxidation of squalene to (S)-2,3-epoxysqualene, which is considered to be a rate-limiting enzyme in steroid biosynthesis. Then, the lanosterol synthase ERG7 catalyzes the cyclization of (S)-2,3 oxidosqualene to lanosterol, a reaction that forms the sterol core. In the next steps, lanosterol is transformed to zymosterol through a complex process involving various demethylation, reduction and desaturation reactions. The lanosterol 14-alpha-demethylase ERG11 (also known as CYP51) catalyzes C14-demethylation of lanosterol to produce 4,4'-dimethyl cholesta-8,14,24-triene-3-beta-ol, which is critical for ergosterol biosynthesis. The C-14 reductase ERG24 reduces the C14=C15 double bond of 4,4-dimethyl-cholesta-8,14,24-trienol to produce 4,4-dimethyl-cholesta-8,24-dienol. 4,4-dimethyl-cholesta-8,24-dienol is substrate of the C-4 demethylation complex ERG25-ERG26-ERG27 in which ERG25 catalyzes the three-step monooxygenation required for the demethylation of 4,4-dimethyl and 4alpha-methylsterols, ERG26 catalyzes the oxidative decarboxylation that results in a reduction of the 3-beta-hydroxy group at the C-3 carbon to an oxo group, and ERG27 is responsible for the reduction of the keto group on the C-3. ERG28 has a role as a scaffold to help anchor ERG25, ERG26 and ERG27 to the endoplasmic reticulum and ERG29 regulates the activity of the iron-containing C4-methylsterol oxidase ERG25. Then, the sterol 24-C-methyltransferase ERG6 catalyzes the methyl transfer from S-adenosyl-methionine to the C-24 of zymosterol to form fecosterol. The C-8 sterol isomerase ERG2 catalyzes the reaction which results in unsaturation at C-7 in the B ring of sterols and thus converts fecosterol to episterol. The sterol-C5-desaturase ERG3 then catalyzes the introduction of a C-5 double bond in the B ring to produce 5-dehydroepisterol. The C-22 sterol desaturase ERG5 further converts 5-dehydroepisterol into ergosta-5,7,22,24(28)-tetraen-3beta-ol by forming the C-22(23) double bond in the sterol side chain. Finally, ergosta-5,7,22,24(28)-tetraen-3beta-ol is substrate of the C-24(28) sterol reductase ERG4 to produce ergosterol. The protein is Delta(7)-sterol 5(6)-desaturase ERG3 of Saccharomyces cerevisiae (strain ATCC 204508 / S288c) (Baker's yeast).